The chain runs to 151 residues: Large ribosomal subunit protein bL9 (151 aa).

Belongs to the bacterial ribosomal protein bL9 family.

Its function is as follows. Binds to the 23S rRNA. In Prochlorococcus marinus (strain MIT 9215), this protein is Large ribosomal subunit protein bL9.